A 714-amino-acid chain; its full sequence is Fatty acid oxidation complex subunit alpha (714 aa).

Positions 1-190 (MEMASVFTLN…KLGLVDDVVP (190 aa)) are enoyl-CoA hydratase. The tract at residues 306 to 714 (APLNSVGILG…FWKTTATDLQ (409 aa)) is 3-hydroxyacyl-CoA dehydrogenase.

In the N-terminal section; belongs to the enoyl-CoA hydratase/isomerase family. It in the central section; belongs to the 3-hydroxyacyl-CoA dehydrogenase family. As to quaternary structure, heterotetramer of two alpha chains (FadJ) and two beta chains (FadI).

The protein resides in the cytoplasm. The enzyme catalyses a (3S)-3-hydroxyacyl-CoA = a (2E)-enoyl-CoA + H2O. The catalysed reaction is a 4-saturated-(3S)-3-hydroxyacyl-CoA = a (3E)-enoyl-CoA + H2O. It catalyses the reaction a (3S)-3-hydroxyacyl-CoA + NAD(+) = a 3-oxoacyl-CoA + NADH + H(+). It carries out the reaction (3S)-3-hydroxybutanoyl-CoA = (3R)-3-hydroxybutanoyl-CoA. It functions in the pathway lipid metabolism; fatty acid beta-oxidation. Functionally, catalyzes the formation of a hydroxyacyl-CoA by addition of water on enoyl-CoA. Also exhibits 3-hydroxyacyl-CoA epimerase and 3-hydroxyacyl-CoA dehydrogenase activities. This Escherichia coli O139:H28 (strain E24377A / ETEC) protein is Fatty acid oxidation complex subunit alpha.